The primary structure comprises 368 residues: MSKKTDTPDYKPSIYSLTRDELIAWAIEHGEKKFRASQIWDWLYKKRVQSFDEMTNISKDFIALLNENFVVNPLKQRIVQESADGTVKYLFELPDGMLIETVLMRQYYGLSVCVTTQVGCNIGCTFCASGLIKKQRDLNNGEITAQIMLVQKYFDERGQGERVSHIVVMGIGEPFDNYTNVLKFLRTVNDDNGLAIGARHITVSTSGLAHKIREFANEGVQVNLAVSLHAPNNELRSSIMRINRSFPLEKLFAAIEYYIETTNRRVTFEYIMLNGVNDTPENAQELADLTKKIRKLSYVNLIPYNPVSEHDQYSRSPKERVEAFYDVLKKNGVNCVVRQEHGTDIDAACGQLRSNTMKRDRQKAKVGR.

The active-site Proton acceptor is the glutamate 100. The 239-residue stretch at 106 to 344 (QYYGLSVCVT…CVVRQEHGTD (239 aa)) folds into the Radical SAM core domain. Cysteine 113 and cysteine 349 are disulfide-bonded. Cysteine 120, cysteine 124, and cysteine 127 together coordinate [4Fe-4S] cluster. Residues 172–173 (GE), serine 204, 227–229 (SLH), and asparagine 305 contribute to the S-adenosyl-L-methionine site. Cysteine 349 functions as the S-methylcysteine intermediate in the catalytic mechanism.

The protein belongs to the radical SAM superfamily. RlmN family. [4Fe-4S] cluster serves as cofactor.

The protein resides in the cytoplasm. The catalysed reaction is adenosine(2503) in 23S rRNA + 2 reduced [2Fe-2S]-[ferredoxin] + 2 S-adenosyl-L-methionine = 2-methyladenosine(2503) in 23S rRNA + 5'-deoxyadenosine + L-methionine + 2 oxidized [2Fe-2S]-[ferredoxin] + S-adenosyl-L-homocysteine. It carries out the reaction adenosine(37) in tRNA + 2 reduced [2Fe-2S]-[ferredoxin] + 2 S-adenosyl-L-methionine = 2-methyladenosine(37) in tRNA + 5'-deoxyadenosine + L-methionine + 2 oxidized [2Fe-2S]-[ferredoxin] + S-adenosyl-L-homocysteine. Its function is as follows. Specifically methylates position 2 of adenine 2503 in 23S rRNA and position 2 of adenine 37 in tRNAs. In Streptococcus agalactiae serotype III (strain NEM316), this protein is Probable dual-specificity RNA methyltransferase RlmN.